The sequence spans 390 residues: Magnesium-protoporphyrin IX monomethyl ester [oxidative] cyclase (390 aa).

The protein belongs to the AcsF family. Fe cation serves as cofactor.

It catalyses the reaction Mg-protoporphyrin IX 13-monomethyl ester + 3 NADPH + 3 O2 + 2 H(+) = 3,8-divinyl protochlorophyllide a + 3 NADP(+) + 5 H2O. It functions in the pathway porphyrin-containing compound metabolism; chlorophyll biosynthesis (light-independent). In terms of biological role, catalyzes the formation of the isocyclic ring in chlorophyll biosynthesis. Mediates the cyclase reaction, which results in the formation of divinylprotochlorophyllide (Pchlide) characteristic of all chlorophylls from magnesium-protoporphyrin IX 13-monomethyl ester (MgPMME). The protein is Magnesium-protoporphyrin IX monomethyl ester [oxidative] cyclase of Prochlorococcus marinus (strain MIT 9312).